The chain runs to 217 residues: Ras-related protein Rab-19 (217 aa).

The GTP site is built by Ser-26, Val-28, Gly-29, Lys-30, Thr-31, Cys-32, Tyr-42, Thr-43, Glu-44, Thr-45, and Thr-49. Thr-31 contributes to the Mg(2+) binding site. The Switch 1 signature appears at 39-54; it reads SGVYTETQQNTIGVDF. Residues Thr-49 and Asp-72 each contribute to the Mg(2+) site. The Switch 2 signature appears at 74–89; the sequence is AGQERFRTITQSYYRS. GTP contacts are provided by Gly-75, Asn-130, Lys-131, Asp-133, Ser-161, Ala-162, and Lys-163. S-geranylgeranyl cysteine attachment occurs at residues Cys-215 and Cys-217. Cys-217 is modified (cysteine methyl ester).

It belongs to the small GTPase superfamily. Rab family. The cofactor is Mg(2+).

Its subcellular location is the cell membrane. It catalyses the reaction GTP + H2O = GDP + phosphate + H(+). Regulated by guanine nucleotide exchange factors (GEFs) which promote the exchange of bound GDP for free GTP. Regulated by GTPase activating proteins (GAPs) which increase the GTP hydrolysis activity. Inhibited by GDP dissociation inhibitors (GDIs). Functionally, the small GTPases Rab are key regulators of intracellular membrane trafficking, from the formation of transport vesicles to their fusion with membranes. Rabs cycle between an inactive GDP-bound form and an active GTP-bound form that is able to recruit to membranes different set of downstream effectors directly responsible for vesicle formation, movement, tethering and fusion. This chain is Ras-related protein Rab-19, found in Homo sapiens (Human).